Reading from the N-terminus, the 262-residue chain is 3-methyl-2-oxobutanoate hydroxymethyltransferase (262 aa).

Mg(2+) contacts are provided by aspartate 44 and aspartate 83. 3-methyl-2-oxobutanoate contacts are provided by residues 44–45, aspartate 83, and lysine 112; that span reads DS. Glutamate 114 is a binding site for Mg(2+). Catalysis depends on glutamate 181, which acts as the Proton acceptor.

It belongs to the PanB family. Homodecamer; pentamer of dimers. Requires Mg(2+) as cofactor.

It localises to the cytoplasm. It catalyses the reaction 3-methyl-2-oxobutanoate + (6R)-5,10-methylene-5,6,7,8-tetrahydrofolate + H2O = 2-dehydropantoate + (6S)-5,6,7,8-tetrahydrofolate. It functions in the pathway cofactor biosynthesis; (R)-pantothenate biosynthesis; (R)-pantoate from 3-methyl-2-oxobutanoate: step 1/2. In terms of biological role, catalyzes the reversible reaction in which hydroxymethyl group from 5,10-methylenetetrahydrofolate is transferred onto alpha-ketoisovalerate to form ketopantoate. This chain is 3-methyl-2-oxobutanoate hydroxymethyltransferase, found in Thiobacillus denitrificans (strain ATCC 25259 / T1).